The chain runs to 467 residues: ATP synthase subunit beta, chloroplastic (467 aa).

149-156 lines the ATP pocket; sequence GGAGVGKT.

Belongs to the ATPase alpha/beta chains family. As to quaternary structure, F-type ATPases have 2 components, CF(1) - the catalytic core - and CF(0) - the membrane proton channel. CF(1) has five subunits: alpha(3), beta(3), gamma(1), delta(1), epsilon(1). CF(0) has four main subunits: a(1), b(1), b'(1) and c(9-12).

Its subcellular location is the plastid. It is found in the chloroplast thylakoid membrane. It catalyses the reaction ATP + H2O + 4 H(+)(in) = ADP + phosphate + 5 H(+)(out). In terms of biological role, produces ATP from ADP in the presence of a proton gradient across the membrane. The catalytic sites are hosted primarily by the beta subunits. The chain is ATP synthase subunit beta, chloroplastic from Cyanidioschyzon merolae (strain NIES-3377 / 10D) (Unicellular red alga).